The primary structure comprises 546 residues: Probable protein kinase UbiB (546 aa).

One can recognise a Protein kinase domain in the interval 124–502 (DFEIKPLASA…HVRQGQSRYF (379 aa)). Residues 130–138 (LASASIAQV) and Lys-153 contribute to the ATP site. Residue Asp-288 is the Proton acceptor of the active site. Helical transmembrane passes span 501–521 (YFLG…VSRP) and 522–542 (EWGL…FVGW).

The protein belongs to the ABC1 family. UbiB subfamily.

The protein localises to the cell inner membrane. Its pathway is cofactor biosynthesis; ubiquinone biosynthesis [regulation]. Its function is as follows. Is probably a protein kinase regulator of UbiI activity which is involved in aerobic coenzyme Q (ubiquinone) biosynthesis. The protein is Probable protein kinase UbiB of Escherichia coli (strain SMS-3-5 / SECEC).